Here is a 226-residue protein sequence, read N- to C-terminus: Apoptosis regulator OPG045 (226 aa).

It belongs to the orthopoxvirus OPG045 family. As to quaternary structure, homodimer. Interacts with host pro-apoptotic protein BCL2L11 (via BH3 domain). Interacts with host NLRP1. Interacts with host BAK.

Its subcellular location is the host mitochondrion outer membrane. The protein resides in the host cytoplasm. Plays a role in evading host innate immune response by inhibiting host inflammasome activation. Interacts with and inhibits NLR-mediated interleukin-1 beta/IL1B production in infected cells. At the host mitochondria outer membrane, interacts with the BH3 domain of host BAK and prevents BAK from binding active BAX. In turn, host apoptosis is inhibited. This chain is Apoptosis regulator OPG045 (OPG045), found in Vaccinia virus (strain Copenhagen) (VACV).